The sequence spans 154 residues: Myoglobin (154 aa).

Residues 2-148 (GLSDGEWQLV…FRNDMAAKYK (147 aa)) form the Globin domain. Phosphoserine is present on Ser-4. Position 65 (His-65) interacts with nitrite. His-65 contacts O2. The residue at position 68 (Thr-68) is a Phosphothreonine. Heme b is bound at residue His-94.

The protein belongs to the globin family. Monomeric.

The protein resides in the cytoplasm. The protein localises to the sarcoplasm. It catalyses the reaction Fe(III)-heme b-[protein] + nitric oxide + H2O = Fe(II)-heme b-[protein] + nitrite + 2 H(+). The enzyme catalyses H2O2 + AH2 = A + 2 H2O. Functionally, monomeric heme protein which primary function is to store oxygen and facilitate its diffusion within muscle tissues. Reversibly binds oxygen through a pentacoordinated heme iron and enables its timely and efficient release as needed during periods of heightened demand. Depending on the oxidative conditions of tissues and cells, and in addition to its ability to bind oxygen, it also has a nitrite reductase activity whereby it regulates the production of bioactive nitric oxide. Under stress conditions, like hypoxia and anoxia, it also protects cells against reactive oxygen species thanks to its pseudoperoxidase activity. This Didelphis virginiana (North American opossum) protein is Myoglobin (MB).